Reading from the N-terminus, the 1378-residue chain is DNA-directed RNA polymerase subunit beta (1378 aa).

The protein belongs to the RNA polymerase beta chain family. In terms of assembly, the RNAP catalytic core consists of 2 alpha, 1 beta, 1 beta' and 1 omega subunit. When a sigma factor is associated with the core the holoenzyme is formed, which can initiate transcription.

The catalysed reaction is RNA(n) + a ribonucleoside 5'-triphosphate = RNA(n+1) + diphosphate. Its function is as follows. DNA-dependent RNA polymerase catalyzes the transcription of DNA into RNA using the four ribonucleoside triphosphates as substrates. This chain is DNA-directed RNA polymerase subunit beta, found in Mesorhizobium japonicum (strain LMG 29417 / CECT 9101 / MAFF 303099) (Mesorhizobium loti (strain MAFF 303099)).